A 740-amino-acid chain; its full sequence is D-ornithine 4,5-aminomutase subunit beta (740 aa).

Substrate-binding positions include glutamate 81, tyrosine 160, histidine 182, and 294–296 (RAQ). One can recognise a B12-binding domain in the interval 602–739 (PLKIVAATVG…VKKRREMREG (138 aa)). Adenosylcob(III)alamin is bound by residues 614–616 (EHS) and histidine 615. N6-(pyridoxal phosphate)lysine is present on lysine 626. Adenosylcob(III)alamin contacts are provided by residues 664–669 (STIISH), threonine 700, and serine 720.

In terms of assembly, heterotetramer of 2 alpha (OraS) and 2 beta (OraE) subunits. Adenosylcob(III)alamin is required as a cofactor. The cofactor is pyridoxal 5'-phosphate.

The enzyme catalyses D-ornithine = (2R,4S)-2,4-diaminopentanoate. Increased activity in the presence of dithiothreitol (DTT) in vitro. Inhibited by 1 mM potassium phosphate and potassium chloride. Inhibited by L-alpha-ornithine, D,L-alpha-lysine, L-beta-lysine (50%-60%), L-alpha-lysine (26%) and by delta-amino-n-valeric acid to a lesser extent. Significant decrease in activity is observed in the presence of 0.2 mM p-chloromercuribenzoate, N-ethylmaleimide and also by 2 mM iodoacetate to a lesser extent but not inhibited by arsenite. Its function is as follows. Component of a complex that catalyzes the reversible migration of the omega amino group of D-ornithine to C-4 to form (2R,4S)-2,4-diaminopentanoic acid. OraE may be the catalytic subunit. Active only on D-ornithine and 2,4-diaminopentanoic acid but not active on L-ornithine, L-beta-lysine, L-alpha-lysine or D-alpha-lysine. The sequence is that of D-ornithine 4,5-aminomutase subunit beta (oraE) from Acetoanaerobium sticklandii (strain ATCC 12662 / DSM 519 / JCM 1433 / CCUG 9281 / NCIMB 10654 / HF) (Clostridium sticklandii).